A 300-amino-acid chain; its full sequence is UDP-3-O-acyl-N-acetylglucosamine deacetylase (300 aa).

Zn(2+) contacts are provided by histidine 76, histidine 235, and aspartate 239. Histidine 262 (proton donor) is an active-site residue.

The protein belongs to the LpxC family. It depends on Zn(2+) as a cofactor.

It catalyses the reaction a UDP-3-O-[(3R)-3-hydroxyacyl]-N-acetyl-alpha-D-glucosamine + H2O = a UDP-3-O-[(3R)-3-hydroxyacyl]-alpha-D-glucosamine + acetate. It participates in glycolipid biosynthesis; lipid IV(A) biosynthesis; lipid IV(A) from (3R)-3-hydroxytetradecanoyl-[acyl-carrier-protein] and UDP-N-acetyl-alpha-D-glucosamine: step 2/6. Functionally, catalyzes the hydrolysis of UDP-3-O-myristoyl-N-acetylglucosamine to form UDP-3-O-myristoylglucosamine and acetate, the committed step in lipid A biosynthesis. This Halorhodospira halophila (strain DSM 244 / SL1) (Ectothiorhodospira halophila (strain DSM 244 / SL1)) protein is UDP-3-O-acyl-N-acetylglucosamine deacetylase.